The following is a 496-amino-acid chain: Probable cytosol aminopeptidase (496 aa).

2 residues coordinate Mn(2+): Lys-261 and Asp-266. Lys-273 is an active-site residue. Mn(2+) is bound by residues Asp-284, Asp-343, and Glu-345. Arg-347 is an active-site residue.

This sequence belongs to the peptidase M17 family. The cofactor is Mn(2+).

It localises to the cytoplasm. The enzyme catalyses Release of an N-terminal amino acid, Xaa-|-Yaa-, in which Xaa is preferably Leu, but may be other amino acids including Pro although not Arg or Lys, and Yaa may be Pro. Amino acid amides and methyl esters are also readily hydrolyzed, but rates on arylamides are exceedingly low.. It carries out the reaction Release of an N-terminal amino acid, preferentially leucine, but not glutamic or aspartic acids.. Its function is as follows. Presumably involved in the processing and regular turnover of intracellular proteins. Catalyzes the removal of unsubstituted N-terminal amino acids from various peptides. The sequence is that of Probable cytosol aminopeptidase from Bacillus pumilus (strain SAFR-032).